Reading from the N-terminus, the 277-residue chain is Polyamine aminopropyltransferase (277 aa).

Residues 2-235 (ELWFTENQDE…SLWTFTMGSK (234 aa)) enclose the PABS domain. Residue glutamine 31 coordinates S-methyl-5'-thioadenosine. Residues histidine 62 and aspartate 86 each coordinate spermidine. Residues glutamate 106 and 137–138 (DG) contribute to the S-methyl-5'-thioadenosine site. The active-site Proton acceptor is the aspartate 155. Residue 155 to 158 (DSTD) participates in spermidine binding. Proline 162 serves as a coordination point for S-methyl-5'-thioadenosine.

The protein belongs to the spermidine/spermine synthase family. As to quaternary structure, homodimer or homotetramer.

It is found in the cytoplasm. The enzyme catalyses S-adenosyl 3-(methylsulfanyl)propylamine + putrescine = S-methyl-5'-thioadenosine + spermidine + H(+). It participates in amine and polyamine biosynthesis; spermidine biosynthesis; spermidine from putrescine: step 1/1. Functionally, catalyzes the irreversible transfer of a propylamine group from the amino donor S-adenosylmethioninamine (decarboxy-AdoMet) to putrescine (1,4-diaminobutane) to yield spermidine. The chain is Polyamine aminopropyltransferase from Thermoanaerobacter pseudethanolicus (strain ATCC 33223 / 39E) (Clostridium thermohydrosulfuricum).